The chain runs to 437 residues: ATP-dependent protease ATPase subunit HslU (437 aa).

ATP contacts are provided by residues Ile-18, 60–65 (GVGKTE), Asp-250, Glu-315, and Arg-387.

It belongs to the ClpX chaperone family. HslU subfamily. As to quaternary structure, a double ring-shaped homohexamer of HslV is capped on each side by a ring-shaped HslU homohexamer. The assembly of the HslU/HslV complex is dependent on binding of ATP.

The protein resides in the cytoplasm. Its function is as follows. ATPase subunit of a proteasome-like degradation complex; this subunit has chaperone activity. The binding of ATP and its subsequent hydrolysis by HslU are essential for unfolding of protein substrates subsequently hydrolyzed by HslV. HslU recognizes the N-terminal part of its protein substrates and unfolds these before they are guided to HslV for hydrolysis. The polypeptide is ATP-dependent protease ATPase subunit HslU (Dinoroseobacter shibae (strain DSM 16493 / NCIMB 14021 / DFL 12)).